We begin with the raw amino-acid sequence, 857 residues long: Trehalose transporter 1 (857 aa).

Disordered regions lie at residues 1–28 (MSGR…KLKE) and 62–202 (DPFL…QKAT). Residues 1-392 (MSGRDNRGAG…VYRPTTNPIY (392 aa)) are Cytoplasmic-facing. Ala9 is subject to Phosphothreonine. Gly12 bears the Phosphoserine mark. A compositionally biased stretch (polar residues) spans 69–81 (VSPQRHPQNTVRT). Residues 134 to 143 (EIREHRDRQQ) are compositionally biased toward basic and acidic residues. Polar residues predominate over residues 171–181 (GNSNTNSNKAA). Residues Ser248, Ser249, and Ser250 each carry the phosphoserine modification. 2 disordered regions span residues 249–269 (SSEE…HQSL) and 280–299 (VLQG…EHKR). A phosphoserine mark is found at Ser320 and Ser322. Residues 327 to 346 (LTSRQHFQQQRSISTDSRKS) are disordered. Residues 330-341 (RQHFQQQRSIST) are compositionally biased toward polar residues. The chain crosses the membrane as a helical span at residues 393-413 (IWTQVLAALSVSLGSLVVGFV). The Extracellular portion of the chain corresponds to 414 to 440 (SAYTSPALVSMTDRNITSFEVTQDAGS). N-linked (GlcNAc...) asparagine glycosylation occurs at Asn428. The chain crosses the membrane as a helical span at residues 441–461 (WVGGIMPLAGLAGGIAGGPLI). Residues 462–473 (EYLGRRNTILAT) lie on the Cytoplasmic side of the membrane. The chain crosses the membrane as a helical span at residues 474-494 (AVPFIVSSLLIACAVNVAMVL). Residues 495–497 (CGR) lie on the Extracellular side of the membrane. The chain crosses the membrane as a helical span at residues 498–518 (FLAGFCVGIASLSLPVYLGET). The Cytoplasmic portion of the chain corresponds to 519–528 (VQPEVRGTLG). A helical membrane pass occupies residues 529–549 (LLPTAFGNIGILLCFVAGSFM). Asn550 carries N-linked (GlcNAc...) asparagine glycosylation. Topologically, residues 550 to 552 (NWS) are extracellular. Residues 553–573 (MLAFLGAALPVPFLILMFLIP) traverse the membrane as a helical segment. Residues 574 to 636 (ETPRWFVGRG…ELLKLNNLKP (63 aa)) are Cytoplasmic-facing. Residues 637–657 (LSISLGLMFFQQFSGINAVIF) form a helical membrane-spanning segment. The Extracellular segment spans residues 658-673 (YTVQIFKDAGSTIDGN). A helical membrane pass occupies residues 674–694 (LCTIIVGIVNFLATFIGIVLI). Over 695-700 (DRAGRK) the chain is Cytoplasmic. A helical membrane pass occupies residues 701–721 (ILLYVSDIAMVLTLFVLGGFF). The Extracellular portion of the chain corresponds to 722 to 740 (YCKTYGPDVSHLGWLPLTC). A helical transmembrane segment spans residues 741–761 (FVIYILGFSLGFGPIPWLMMG). Over 762–767 (EILPAK) the chain is Cytoplasmic. The chain crosses the membrane as a helical span at residues 768 to 788 (IRGSAASVATAFNWFCTFVVT). Residues 789 to 801 (KTFQDLTVAMGAH) lie on the Extracellular side of the membrane. Residues 802 to 822 (GAFWLFGAICFVGLFFVIIYV) form a helical membrane-spanning segment. The Cytoplasmic portion of the chain corresponds to 823–857 (PETQGKTLEDIERKMMGRVRRMSSVANIKPLSFNM). Phosphoserine is present on residues Ser845 and Ser846.

Belongs to the major facilitator superfamily. Sugar transporter (TC 2.A.1.1) family. Trehalose transporter subfamily. In terms of tissue distribution, expressed in perineurial glia of the outer layer of the nervous system that forms the blood brain barrier (at protein level). Expressed in the fat body (at protein level). As to expression, may be specifically expressed in perineurial glia (at protein level). May be specifically expressed in the fat body (at protein level).

It is found in the cell membrane. It localises to the vesicle. It carries out the reaction alpha,alpha-trehalose(in) = alpha,alpha-trehalose(out). The enzyme catalyses D-glucose(out) = D-glucose(in). Functionally, low-capacity facilitative transporter for trehalose. Can also transport glucose. Does not transport maltose, sucrose, lactose or fructose. Mediates the bidirectional transfer of trehalose. Responsible for the transport of trehalose synthesized in the fat body and the incorporation of trehalose into other tissues that require a carbon source, thereby regulating trehalose levels in the hemolymph. Required in glial cells of the blood brain barrier to fuel glycolysis but not required in neurons. Neurons rely on the citric acid cycle for their energy needs and utilise alanine and lactate, by-products of glial cell glycolysis released into the hemolymph, as fuel. Increased expression in glial cells of the blood brain barrier during starvation and increased cell surface localization enhances carbohydrate uptake to protect the central nervous system from restricted nutrient availability. The protein is Trehalose transporter 1 of Drosophila melanogaster (Fruit fly).